The following is a 340-amino-acid chain: Dihydroorotate dehydrogenase (quinone) (340 aa).

FMN is bound by residues 65–69 and T89; that span reads AGLDK. K69 lines the substrate pocket. 114-118 provides a ligand contact to substrate; the sequence is NRMGF. FMN contacts are provided by N142 and N175. N175 is a substrate binding site. The Nucleophile role is filled by S178. N180 contacts substrate. FMN-binding residues include K220 and T248. Substrate is bound at residue 249–250; that stretch reads NT. Residues G271, G300, and 321 to 322 contribute to the FMN site; that span reads YT.

It belongs to the dihydroorotate dehydrogenase family. Type 2 subfamily. As to quaternary structure, monomer. It depends on FMN as a cofactor.

The protein localises to the cell membrane. The enzyme catalyses (S)-dihydroorotate + a quinone = orotate + a quinol. It participates in pyrimidine metabolism; UMP biosynthesis via de novo pathway; orotate from (S)-dihydroorotate (quinone route): step 1/1. In terms of biological role, catalyzes the conversion of dihydroorotate to orotate with quinone as electron acceptor. In Paraburkholderia xenovorans (strain LB400), this protein is Dihydroorotate dehydrogenase (quinone).